The chain runs to 484 residues: tRNA sulfurtransferase (484 aa).

In terms of domain architecture, THUMP spans 63-167 (EAFGERLACI…NDNLYLIDKR (105 aa)). ATP is bound by residues 185–186 (LI), Lys-267, Gly-289, and Gln-298. Cys-346 and Cys-458 form a disulfide bridge. One can recognise a Rhodanese domain in the interval 406–484 (INANEIIIDV…GYTNVKVYRP (79 aa)). Cys-458 acts as the Cysteine persulfide intermediate in catalysis.

It belongs to the ThiI family.

It is found in the cytoplasm. It catalyses the reaction [ThiI sulfur-carrier protein]-S-sulfanyl-L-cysteine + a uridine in tRNA + 2 reduced [2Fe-2S]-[ferredoxin] + ATP + H(+) = [ThiI sulfur-carrier protein]-L-cysteine + a 4-thiouridine in tRNA + 2 oxidized [2Fe-2S]-[ferredoxin] + AMP + diphosphate. The catalysed reaction is [ThiS sulfur-carrier protein]-C-terminal Gly-Gly-AMP + S-sulfanyl-L-cysteinyl-[cysteine desulfurase] + AH2 = [ThiS sulfur-carrier protein]-C-terminal-Gly-aminoethanethioate + L-cysteinyl-[cysteine desulfurase] + A + AMP + 2 H(+). It functions in the pathway cofactor biosynthesis; thiamine diphosphate biosynthesis. In terms of biological role, catalyzes the ATP-dependent transfer of a sulfur to tRNA to produce 4-thiouridine in position 8 of tRNAs, which functions as a near-UV photosensor. Also catalyzes the transfer of sulfur to the sulfur carrier protein ThiS, forming ThiS-thiocarboxylate. This is a step in the synthesis of thiazole, in the thiamine biosynthesis pathway. The sulfur is donated as persulfide by IscS. This chain is tRNA sulfurtransferase, found in Shewanella halifaxensis (strain HAW-EB4).